Here is a 352-residue protein sequence, read N- to C-terminus: Photosystem II D2 protein (352 aa).

Threonine 2 carries the post-translational modification N-acetylthreonine. The residue at position 2 (threonine 2) is a Phosphothreonine. Residues 40 to 60 form a helical membrane-spanning segment; sequence CAYFALGGWLTGTTFVTSWYT. Residue histidine 117 coordinates chlorophyll a. The chain crosses the membrane as a helical span at residues 124-140; it reads GFMLRQFEIARAVKIRP. Glutamine 129 and asparagine 142 together coordinate pheophytin a. The chain crosses the membrane as a helical span at residues 152-165; it reads VFVSVFLIYPLGQA. Histidine 197 serves as a coordination point for chlorophyll a. The helical transmembrane segment at 207–227 threads the bilayer; the sequence is AALLCAIHGATVENTLFEDGD. Positions 214 and 261 each coordinate a plastoquinone. Histidine 214 contributes to the Fe cation binding site. Fe cation is bound at residue histidine 268. A helical membrane pass occupies residues 278 to 294; that stretch reads GLWMSALGVVGLALNLR.

This sequence belongs to the reaction center PufL/M/PsbA/D family. As to quaternary structure, PSII is composed of 1 copy each of membrane proteins PsbA, PsbB, PsbC, PsbD, PsbE, PsbF, PsbH, PsbI, PsbJ, PsbK, PsbL, PsbM, PsbT, PsbX, PsbY, PsbZ, Psb30/Ycf12, at least 3 peripheral proteins of the oxygen-evolving complex and a large number of cofactors. It forms dimeric complexes. The D1/D2 heterodimer binds P680, chlorophylls that are the primary electron donor of PSII, and subsequent electron acceptors. It shares a non-heme iron and each subunit binds pheophytin, quinone, additional chlorophylls, carotenoids and lipids. There is also a Cl(-1) ion associated with D1 and D2, which is required for oxygen evolution. The PSII complex binds additional chlorophylls, carotenoids and specific lipids. is required as a cofactor.

The protein resides in the plastid. The protein localises to the chloroplast thylakoid membrane. The enzyme catalyses 2 a plastoquinone + 4 hnu + 2 H2O = 2 a plastoquinol + O2. Photosystem II (PSII) is a light-driven water:plastoquinone oxidoreductase that uses light energy to abstract electrons from H(2)O, generating O(2) and a proton gradient subsequently used for ATP formation. It consists of a core antenna complex that captures photons, and an electron transfer chain that converts photonic excitation into a charge separation. The D1/D2 (PsbA/PsbD) reaction center heterodimer binds P680, the primary electron donor of PSII as well as several subsequent electron acceptors. D2 is needed for assembly of a stable PSII complex. The chain is Photosystem II D2 protein from Tupiella akineta (Green alga).